Reading from the N-terminus, the 760-residue chain is Catalase-peroxidase (760 aa).

The N-terminal stretch at 1–45 (MKGTPFRSPHLYQEGSSCMHRTIRSVAAVLTVVLSATIPMVPAWS) is a signal peptide. Positions 124 to 245 (WHGAGTYRTY…LAATQMGLIY (122 aa)) form a cross-link, tryptophyl-tyrosyl-methioninium (Trp-Tyr) (with M-271). The active-site Proton acceptor is histidine 125. Positions 245-271 (YVNPEGPNGVPDPVAAARDIREAFGGM) form a cross-link, tryptophyl-tyrosyl-methioninium (Tyr-Met) (with W-124). Histidine 286 contributes to the heme b binding site.

The protein belongs to the peroxidase family. Peroxidase/catalase subfamily. Homodimer or homotetramer. Requires heme b as cofactor. In terms of processing, formation of the three residue Trp-Tyr-Met cross-link is important for the catalase, but not the peroxidase activity of the enzyme.

The catalysed reaction is H2O2 + AH2 = A + 2 H2O. The enzyme catalyses 2 H2O2 = O2 + 2 H2O. In terms of biological role, bifunctional enzyme with both catalase and broad-spectrum peroxidase activity. This chain is Catalase-peroxidase, found in Granulibacter bethesdensis (strain ATCC BAA-1260 / CGDNIH1).